A 202-amino-acid chain; its full sequence is GTP cyclohydrolase 1 (202 aa).

Zn(2+) contacts are provided by Cys-90, His-93, and Cys-163.

This sequence belongs to the GTP cyclohydrolase I family. As to quaternary structure, homomer.

It carries out the reaction GTP + H2O = 7,8-dihydroneopterin 3'-triphosphate + formate + H(+). The protein operates within cofactor biosynthesis; 7,8-dihydroneopterin triphosphate biosynthesis; 7,8-dihydroneopterin triphosphate from GTP: step 1/1. This Mycobacterium ulcerans (strain Agy99) protein is GTP cyclohydrolase 1.